Consider the following 142-residue polypeptide: Large ribosomal subunit protein uL11 (142 aa).

This sequence belongs to the universal ribosomal protein uL11 family. Part of the ribosomal stalk of the 50S ribosomal subunit. Interacts with L10 and the large rRNA to form the base of the stalk. L10 forms an elongated spine to which L12 dimers bind in a sequential fashion forming a multimeric L10(L12)X complex. In terms of processing, one or more lysine residues are methylated.

Forms part of the ribosomal stalk which helps the ribosome interact with GTP-bound translation factors. The chain is Large ribosomal subunit protein uL11 from Bradyrhizobium diazoefficiens (strain JCM 10833 / BCRC 13528 / IAM 13628 / NBRC 14792 / USDA 110).